A 325-amino-acid polypeptide reads, in one-letter code: NADH-quinone oxidoreductase subunit H (325 aa).

A run of 8 helical transmembrane segments spans residues 11 to 31 (ILLT…CGAF), 81 to 101 (VIFT…FAIV), 114 to 134 (IGIL…LFAG), 154 to 174 (LSYE…AGSF), 186 to 206 (VWNV…GVAV), 237 to 257 (FFVG…TLFF), 265 to 285 (LPPF…FILI), and 304 to 324 (ICLP…LWQA).

Belongs to the complex I subunit 1 family. As to quaternary structure, NDH-1 is composed of 13 different subunits. Subunits NuoA, H, J, K, L, M, N constitute the membrane sector of the complex.

Its subcellular location is the cell inner membrane. It catalyses the reaction a quinone + NADH + 5 H(+)(in) = a quinol + NAD(+) + 4 H(+)(out). NDH-1 shuttles electrons from NADH, via FMN and iron-sulfur (Fe-S) centers, to quinones in the respiratory chain. The immediate electron acceptor for the enzyme in this species is believed to be ubiquinone. Couples the redox reaction to proton translocation (for every two electrons transferred, four hydrogen ions are translocated across the cytoplasmic membrane), and thus conserves the redox energy in a proton gradient. This subunit may bind ubiquinone. This is NADH-quinone oxidoreductase subunit H from Escherichia coli O139:H28 (strain E24377A / ETEC).